The primary structure comprises 403 residues: MSSYLFTSESVSEGHPDKVADQISDAVLDAILTQDQRARVACETMVKTGVAIVAGEITTSAWIDLEALTRKVITDIGYDSSDVGFDGATCGVLNLIGKQSPHIAQGVDRKKPEEMGAGDQGLMFGYATNETDSYMPAAIHLSHRLVEQQAKIRKKKNSPLSWLRPDAKSQVTLRYENGVVSAIDAVVLSTQHAPGIKQKDLIEAVREEIIKPVLPAKWLHKGTKFHINPTGKFEIGGPVGDCGLTGRKIIVDTYGGWARHGGGAFSGKDPSKVDRSAAYAARYVAKNVVAAGLADRCEVQVSYAIGVAEPTSISVTTFGTGKISDDKIEKLIRKHFDLRPYGIIKMLDLIHPMYQQTAAYGHFGRKPKEFSYLNGEGETVNATAFSWEKTDRAAALRADAKLK.

Residue His-15 coordinates ATP. Asp-17 contacts Mg(2+). Residue Glu-43 participates in K(+) binding. Residues Glu-56 and Gln-99 each coordinate L-methionine. Residues 99–109 (QSPHIAQGVDR) are flexible loop. ATP contacts are provided by residues 166–168 (DAK), 232–233 (KF), Asp-241, 247–248 (RK), Ala-264, and Lys-268. Asp-241 is a binding site for L-methionine. Lys-272 is an L-methionine binding site.

This sequence belongs to the AdoMet synthase family. As to quaternary structure, homotetramer; dimer of dimers. The cofactor is Mg(2+). It depends on K(+) as a cofactor.

The protein resides in the cytoplasm. The catalysed reaction is L-methionine + ATP + H2O = S-adenosyl-L-methionine + phosphate + diphosphate. It functions in the pathway amino-acid biosynthesis; S-adenosyl-L-methionine biosynthesis; S-adenosyl-L-methionine from L-methionine: step 1/1. In terms of biological role, catalyzes the formation of S-adenosylmethionine (AdoMet) from methionine and ATP. The overall synthetic reaction is composed of two sequential steps, AdoMet formation and the subsequent tripolyphosphate hydrolysis which occurs prior to release of AdoMet from the enzyme. The sequence is that of S-adenosylmethionine synthase from Stenotrophomonas maltophilia (strain K279a).